A 328-amino-acid polypeptide reads, in one-letter code: Radiation response metalloprotease IrrE (328 aa).

The interval 1-31 is disordered; the sequence is MPSANVSPPCPSGVRGGGMGPKAKAEASKPH. His-118 contributes to the Zn(2+) binding site. Glu-119 is an active-site residue. His-122 and Glu-149 together coordinate Zn(2+). 2 disordered regions span residues 217-238 and 309-328; these read PREQAASDEDAGPSTEKVLTVR and RLGRKDSEQADRDEPQDAAQ.

In terms of biological role, plays a central regulatory role in DNA repair and protection pathways in response to radiation stress. Acts as a site-specific metalloprotease that cleaves and inactivates the repressor protein DdrO, resulting in induced expression of genes required for DNA repair and cell survival after exposure to radiation. Regulates the expression of dozens of proteins from different pathways, including the important DNA repair proteins RecA and PprA. Binds to the promoters of recA and pprA. The protein is Radiation response metalloprotease IrrE of Deinococcus radiodurans (strain ATCC 13939 / DSM 20539 / JCM 16871 / CCUG 27074 / LMG 4051 / NBRC 15346 / NCIMB 9279 / VKM B-1422 / R1).